A 305-amino-acid chain; its full sequence is Acetaldehyde dehydrogenase 5 (305 aa).

11–14 contacts NAD(+); it reads SGNI. The active-site Acyl-thioester intermediate is Cys-130. NAD(+)-binding positions include 161-169 and Asn-272; that span reads SIGPGTRAN.

Belongs to the acetaldehyde dehydrogenase family.

The catalysed reaction is acetaldehyde + NAD(+) + CoA = acetyl-CoA + NADH + H(+). In Dechloromonas aromatica (strain RCB), this protein is Acetaldehyde dehydrogenase 5.